A 574-amino-acid chain; its full sequence is Arginine--tRNA ligase (574 aa).

Residues 126–136 carry the 'HIGH' region motif; sequence PNIAKRMHVGH.

Belongs to the class-I aminoacyl-tRNA synthetase family. As to quaternary structure, monomer.

It localises to the cytoplasm. The catalysed reaction is tRNA(Arg) + L-arginine + ATP = L-arginyl-tRNA(Arg) + AMP + diphosphate. The polypeptide is Arginine--tRNA ligase (Chloroflexus aggregans (strain MD-66 / DSM 9485)).